We begin with the raw amino-acid sequence, 187 residues long: Ribonuclease HII (187 aa).

An RNase H type-2 domain is found at 1-187 (MICGTDEAGR…NPVKRLLANL (187 aa)). A divalent metal cation is bound by residues D6, E7, and D98.

This sequence belongs to the RNase HII family. It depends on Mn(2+) as a cofactor. Requires Mg(2+) as cofactor.

It is found in the cytoplasm. It catalyses the reaction Endonucleolytic cleavage to 5'-phosphomonoester.. Endonuclease that specifically degrades the RNA of RNA-DNA hybrids. In Idiomarina loihiensis (strain ATCC BAA-735 / DSM 15497 / L2-TR), this protein is Ribonuclease HII.